The primary structure comprises 1998 residues: Histone acetyltransferase KAT6A (1998 aa).

Residues 1-77 (MVKLANPLYT…LNSYKDPDNP (77 aa)) enclose the SAMD1-like winged helix (WH) domain. The tract at residues 1–144 (MVKLANPLYT…CGGTAASGFH (144 aa)) is required for activation of RUNX1-1. Residues 52-166 (ELSVKDGTIL…HGRLLKDGPL (115 aa)) form a required for nuclear localization region. The tract at residues 72–93 (KDPDNPGRIALPKPRNHGKLDN) is disordered. Positions 95–171 (QSVDWNKLLK…KDGPLYRLNT (77 aa)) constitute an H15 domain. The interaction with PML stretch occupies residues 144 to 662 (HQQLRLAIKR…RKGYGRFLID (519 aa)). Lys-172 bears the N6-acetyllysine mark. 2 consecutive PHD-type zinc fingers follow at residues 199 to 258 (DKPV…LRWQ) and 255 to 306 (LRWQ…GMWI). The interval 312 to 662 (PRKKGRKLLQ…RKGYGRFLID (351 aa)) is interaction with RUNX1-1. Residues 336–377 (GRPKNRLKKQSTVSKGPFSKVRTGPGRGRKRKITVSSQSASS) are disordered. 2 positions are modified to N6-acetyllysine: Lys-350 and Lys-355. Residue Thr-369 is modified to Phosphothreonine; by PKB/AKT1. Position 419 is a phosphoserine (Ser-419). The segment at 440 to 464 (KGNRKSSTSHWPTDNQDGWESKQES) is disordered. The span at 444 to 457 (KSSTSHWPTDNQDG) shows a compositional bias: polar residues. The residue at position 471 (Ser-471) is a Phosphoserine. The tract at residues 486 to 776 (IQEQALQKVG…VDPECLRWTP (291 aa)) is catalytic. The MYST-type HAT domain occupies 502-776 (PQVRCPSVIE…VDPECLRWTP (275 aa)). The segment at 505–808 (RCPSVIEFGK…EPQGQERELE (304 aa)) is mediates interaction with BRPF1, required for histone H3 acetyltransferase activity. The segment at 535–560 (LYLCEFCLKYMKSRTILQQHMKKCGW) adopts a C2HC MYST-type zinc-finger fold. Lys-602 is modified (N6-acetyllysine; by autocatalysis). Acetyl-CoA contacts are provided by residues 643 to 647 (SCIMI) and 652 to 658 (QRKGYGR). Residue Glu-678 is the Proton donor/acceptor of the active site. Ser-682 contributes to the acetyl-CoA binding site. Residues 783-947 (VVSEEEDEEA…RFSESADLWR (165 aa)) form a disordered region. The residue at position 785 (Ser-785) is a Phosphoserine. Acidic residues predominate over residues 785–797 (SEEEDEEADDGEK). Positions 798 to 840 (EEPQGQERELETRERVGKSVSRENKDQDSSSLIESEKKPEVKE) are enriched in basic and acidic residues. Lys-815 is modified (N6-acetyllysine). Lys-835 is covalently cross-linked (Glycyl lysine isopeptide (Lys-Gly) (interchain with G-Cter in SUMO2)). The span at 865–874 (RRGRCGRKNR) shows a compositional bias: basic residues. The span at 875-886 (KTQERFGDKDSK) shows a compositional bias: basic and acidic residues. Tyr-900 carries the post-translational modification Phosphotyrosine. Residues 903-916 (CEEKSAASRERYTE) are compositionally biased toward basic and acidic residues. Phosphoserine occurs at positions 940 and 953. Residues 982–1079 (GFSESSEEEE…EEEEDENELF (98 aa)) are disordered. Lys-1006 carries the post-translational modification N6-acetyllysine. Basic residues predominate over residues 1008–1029 (TLKRKKPILHRRRRVRKRKHHN). The segment covering 1030–1041 (SSVVTETISETT) has biased composition (low complexity). 2 stretches are compositionally biased toward acidic residues: residues 1042–1052 (EVLDEPFEDSD) and 1064–1077 (FEIEEEEEEEDENE). Phosphoserine is present on residues Ser-1088, Ser-1089, and Ser-1114. 4 disordered regions span residues 1096 to 1175 (QASS…PGFK), 1195 to 1436 (PIKP…EGAY), 1450 to 1567 (QSYT…STMG), and 1630 to 1702 (TCVV…CSMN). The segment covering 1106–1119 (DEEEEEEESDDADD) has biased composition (acidic residues). The segment covering 1135-1146 (NSASLEPDTSTP) has biased composition (polar residues). Over residues 1147–1173 (MKKKKGWPKGKSRKPIHWKKRPGRKPG) the composition is skewed to basic residues. A compositionally biased stretch (basic and acidic residues) spans 1203 to 1228 (RTQESEELVEVKEGLVEERKEEMHTE). Composition is skewed to acidic residues over residues 1229-1240 (ADEEAEEEEDAA) and 1281-1298 (EEPQELEEQEQEEEDEVT). Basic and acidic residues-rich tracts occupy residues 1316–1333 (HLDSLKTKEPEGQPARED), 1351–1360 (DSRENAKDKD), and 1392–1413 (DSNTKEELIELKEEEEIPHSEL). A compositionally biased stretch (low complexity) spans 1472 to 1496 (HNSPISSIPSHPSQSVRSVSSPSMP). Over residues 1501-1522 (GYTQISPEQGSLSAPSMQNMET) the composition is skewed to polar residues. The interval 1510 to 1635 (GSLSAPSMQN…KSPQTCVVER (126 aa)) is interaction with RUNX1-2. The interaction with PML stretch occupies residues 1510–1735 (GSLSAPSMQN…YERIPGDFGA (226 aa)). Residues 1527–1541 (DVPSVSDHSQQVVDS) are compositionally biased toward low complexity. Over residues 1549–1567 (IESTTENYENPSSYDSTMG) the composition is skewed to polar residues. Pro residues-rich tracts occupy residues 1639–1658 (NQQPPPPPPPPPPPQQPQPQ) and 1665–1693 (PQPPPPQPQQQPPPPPQQQPQPPPPPQQQ). The interval 1907–1942 (SMNMNTLNAMNSYRMTQPMMNSSYHSNPAYMNQTAQ) is required for activation of RUNX1-2.

It belongs to the MYST (SAS/MOZ) family. Component of the MOZ/MORF complex composed at least of ING5, KAT6A, KAT6B, MEAF6 and one of BRPF1, BRD1/BRPF2 and BRPF3. Interacts with RUNX1; phosphorylation of RUNX1 enhances the interaction. Interacts with RUNX2. Interacts with p53/TP53. Interacts with PML and this interaction positively regulates its acetylation activity towards p53/TP53. Autoacetylated. Autoacetylation at Lys-602 is required for proper function. In terms of processing, phosphorylation at Thr-369 by PKB/AKT1 inhibits its interaction with PML and negatively regulates its acetylation activity towards p53/TP53.

Its subcellular location is the nucleus. The protein localises to the nucleolus. The protein resides in the nucleoplasm. It localises to the PML body. It catalyses the reaction L-lysyl-[protein] + acetyl-CoA = N(6)-acetyl-L-lysyl-[protein] + CoA + H(+). Histone acetyltransferase that acetylates lysine residues in histone H3 and histone H4 (in vitro). Component of the MOZ/MORF complex which has a histone H3 acetyltransferase activity. May act as a transcriptional coactivator for RUNX1 and RUNX2. Acetylates p53/TP53 at 'Lys-120' and 'Lys-382' and controls its transcriptional activity via association with PML. The polypeptide is Histone acetyltransferase KAT6A (Kat6a) (Rattus norvegicus (Rat)).